Here is a 187-residue protein sequence, read N- to C-terminus: Elongation factor P (187 aa).

Belongs to the elongation factor P family.

The protein resides in the cytoplasm. It participates in protein biosynthesis; polypeptide chain elongation. Functionally, involved in peptide bond synthesis. Stimulates efficient translation and peptide-bond synthesis on native or reconstituted 70S ribosomes in vitro. Probably functions indirectly by altering the affinity of the ribosome for aminoacyl-tRNA, thus increasing their reactivity as acceptors for peptidyl transferase. This is Elongation factor P from Rhodococcus opacus (strain B4).